Here is a 455-residue protein sequence, read N- to C-terminus: MGGLKFHVLMYPWFATGHMTPFLFLANKLAEKGHTVTFLIPKKALKQLENLNLFPHNIVFRSVTVPHVDGLPVGTETVSEIPVTSADLLMSAMDLTRDQVEGVVRAVEPDLIFFDFAHWIPEVARDFGLKTVKYVVVSASTIASMLVPGGELGVPPPGYPSSKVLLRKQDAYTMKNLESTNTINVGPNLLERVTTSLMNSDVIAIRTAREIEGNFCDYIEKHCRKKVLLTGPVFPEPDKTRELEERWVKWLSGYEPDSVVFCALGSQVILEKDQFQELCLGMELTGSPFLVAVKPPRGSSTIQEALPEGFEERVKGRGVVWGEWVQQPLLLSHPSVGCFVSHCGFGSMWESLLSDCQIVLVPQLGDQVLNTRLLSDELKVSVEVAREETGWFSKESLFDAINSVMKRDSEIGNLVKKNHTKWRETLTSPGLVTGYVDNFIESLQDLVSGTNHVSK.

Residues S266, V325–Q327, H342–E350, and L364–Q367 contribute to the UDP-alpha-D-glucose site.

Belongs to the UDP-glycosyltransferase family.

This chain is UDP-glycosyltransferase 79B2 (UGT79B2), found in Arabidopsis thaliana (Mouse-ear cress).